We begin with the raw amino-acid sequence, 258 residues long: Imidazole glycerol phosphate synthase subunit HisF (258 aa).

Active-site residues include aspartate 11 and aspartate 130.

This sequence belongs to the HisA/HisF family. As to quaternary structure, heterodimer of HisH and HisF.

It localises to the cytoplasm. It catalyses the reaction 5-[(5-phospho-1-deoxy-D-ribulos-1-ylimino)methylamino]-1-(5-phospho-beta-D-ribosyl)imidazole-4-carboxamide + L-glutamine = D-erythro-1-(imidazol-4-yl)glycerol 3-phosphate + 5-amino-1-(5-phospho-beta-D-ribosyl)imidazole-4-carboxamide + L-glutamate + H(+). The protein operates within amino-acid biosynthesis; L-histidine biosynthesis; L-histidine from 5-phospho-alpha-D-ribose 1-diphosphate: step 5/9. IGPS catalyzes the conversion of PRFAR and glutamine to IGP, AICAR and glutamate. The HisF subunit catalyzes the cyclization activity that produces IGP and AICAR from PRFAR using the ammonia provided by the HisH subunit. The protein is Imidazole glycerol phosphate synthase subunit HisF of Escherichia coli O127:H6 (strain E2348/69 / EPEC).